The primary structure comprises 610 residues: Glutamine--fructose-6-phosphate aminotransferase [isomerizing] (610 aa).

The active-site Nucleophile; for GATase activity is C2. Residues 2 to 219 form the Glutamine amidotransferase type-2 domain; that stretch reads CGIVGAVAQR…EGDVAEITRR (218 aa). 2 consecutive SIS domains span residues 287-427 and 459-600; these read ADEL…LRGM and LAEG…VDQP. The For Fru-6P isomerization activity role is filled by K605.

In terms of assembly, homodimer.

The protein localises to the cytoplasm. The catalysed reaction is D-fructose 6-phosphate + L-glutamine = D-glucosamine 6-phosphate + L-glutamate. Functionally, catalyzes the first step in hexosamine metabolism, converting fructose-6P into glucosamine-6P using glutamine as a nitrogen source. This chain is Glutamine--fructose-6-phosphate aminotransferase [isomerizing], found in Pectobacterium atrosepticum (strain SCRI 1043 / ATCC BAA-672) (Erwinia carotovora subsp. atroseptica).